We begin with the raw amino-acid sequence, 355 residues long: MSKIKARKGAPYARILGVGGYRPVRVVPNDVILEKIDSSDEWIRSRSGIETRHWASDEETVAAMSIEASGKAIADAGITASQIGAVVVSTVSHFSQTPAIATEIADKLGTNKAAAFDISAGCAGFGYGLTLAKGMVVEGSAEYVLVIGVERLSDLTDLEDRATAFLFGDGAGAVVVGPSEEPHIGPTVWGSEGDKAGTIKQTVPWDRYLPHSRLRSSGGTPTGDVSPLPLDSEGNVKFPAITQEGQAVFRWAVFEMAKVAQQALDAAGITSDDLDVFIPHQANERIIDSMVKTLKLPEHVTVARDVRTTGNTSAASIPLAMERLLATGEAKSGDTALVIGFGAGLVYAATVVTLP.

Active-site residues include C122 and H280. Positions 281–285 (QANER) are ACP-binding. N311 is an active-site residue.

It belongs to the thiolase-like superfamily. FabH family. In terms of assembly, homodimer.

The protein resides in the cytoplasm. It carries out the reaction malonyl-[ACP] + acetyl-CoA + H(+) = 3-oxobutanoyl-[ACP] + CO2 + CoA. The protein operates within lipid metabolism; fatty acid biosynthesis. Catalyzes the condensation reaction of fatty acid synthesis by the addition to an acyl acceptor of two carbons from malonyl-ACP. Catalyzes the first condensation reaction which initiates fatty acid synthesis and may therefore play a role in governing the total rate of fatty acid production. Possesses both acetoacetyl-ACP synthase and acetyl transacylase activities. Its substrate specificity determines the biosynthesis of branched-chain and/or straight-chain of fatty acids. In Streptomyces avermitilis (strain ATCC 31267 / DSM 46492 / JCM 5070 / NBRC 14893 / NCIMB 12804 / NRRL 8165 / MA-4680), this protein is Beta-ketoacyl-[acyl-carrier-protein] synthase III 1.